We begin with the raw amino-acid sequence, 258 residues long: Imidazole glycerol phosphate synthase subunit HisF (258 aa).

Catalysis depends on residues aspartate 11 and aspartate 130.

It belongs to the HisA/HisF family. In terms of assembly, heterodimer of HisH and HisF.

The protein localises to the cytoplasm. The catalysed reaction is 5-[(5-phospho-1-deoxy-D-ribulos-1-ylimino)methylamino]-1-(5-phospho-beta-D-ribosyl)imidazole-4-carboxamide + L-glutamine = D-erythro-1-(imidazol-4-yl)glycerol 3-phosphate + 5-amino-1-(5-phospho-beta-D-ribosyl)imidazole-4-carboxamide + L-glutamate + H(+). It functions in the pathway amino-acid biosynthesis; L-histidine biosynthesis; L-histidine from 5-phospho-alpha-D-ribose 1-diphosphate: step 5/9. Functionally, IGPS catalyzes the conversion of PRFAR and glutamine to IGP, AICAR and glutamate. The HisF subunit catalyzes the cyclization activity that produces IGP and AICAR from PRFAR using the ammonia provided by the HisH subunit. The protein is Imidazole glycerol phosphate synthase subunit HisF of Escherichia fergusonii (strain ATCC 35469 / DSM 13698 / CCUG 18766 / IAM 14443 / JCM 21226 / LMG 7866 / NBRC 102419 / NCTC 12128 / CDC 0568-73).